A 289-amino-acid polypeptide reads, in one-letter code: RING-H2 finger protein ATL30 (289 aa).

Residues 26-46 traverse the membrane as a helical segment; sequence VIILTVILLVVFFIGFFAIYF. An RING-type; atypical zinc finger spans residues 114 to 157; the sequence is CAICLLEFEEEHILLRLLTTCYHVFHQECIDQWLESNKTCPVCR. The interval 181-206 is disordered; that stretch reads HENRDQEQTSTSNEVMLSRQSSGNNE. The span at 188 to 204 shows a compositional bias: polar residues; it reads QTSTSNEVMLSRQSSGN.

It belongs to the RING-type zinc finger family. ATL subfamily.

Its subcellular location is the membrane. The catalysed reaction is S-ubiquitinyl-[E2 ubiquitin-conjugating enzyme]-L-cysteine + [acceptor protein]-L-lysine = [E2 ubiquitin-conjugating enzyme]-L-cysteine + N(6)-ubiquitinyl-[acceptor protein]-L-lysine.. It functions in the pathway protein modification; protein ubiquitination. The polypeptide is RING-H2 finger protein ATL30 (ATL30) (Arabidopsis thaliana (Mouse-ear cress)).